Reading from the N-terminus, the 160-residue chain is Tumor suppressor ARF (160 aa).

An interaction with CDK5RAP3 and MDM2 region spans residues 1–63; it reads MGRRFVVTVR…RRGPQPHPGP (63 aa). Disordered regions lie at residues 49–74 and 90–116; these read PERI…QSGS and HPLP…GRGA.

In terms of assembly, does not interact with cyclins, CDK1, CDK2, CDK4, CDK5 or CDK6. Binds to BCL6, E2F1, HUWE1, MDM2, MYC, NPM1/B23, TOP1/TOPOI and UBE2I/UBC9. Interacts with TBRG1 and COMMD1. Interacts with CDKN2AIP and E4F1. Interacts with CDK5RAP3 and MDM2; form a ternary complex involved in regulation of p53/TP53. Interacts with NOP53; the interaction is direct and promotes ARF nucleoplasmic relocalization and ubiquitin-mediated proteasomal degradation. Interacts with TTF1 (via the N-terminal region (NRD) and a C-terminal region); the interaction is direct and inhibits the nucleolar localization of TTF1. Post-translationally, ubiquitinated in normal cells by TRIP12 via the ubiquitin fusion degradation (UFD) pathway, a process that mediates ubiquitination at the N-terminus, regardless of the absence of lysine residues. Ubiquitination leads to its proteasomal degradation. In cancer cells, however, TRIP12 is located in a different cell compartment, preventing ubiquitination and degradation. Widely expressed with very low levels in kidney and colon.

Its subcellular location is the nucleus. The protein localises to the nucleolus. It is found in the nucleoplasm. Its function is as follows. Capable of inducing cell cycle arrest in G1 and G2 phases. Acts as a tumor suppressor. Binds to MDM2 and blocks its nucleocytoplasmic shuttling by sequestering it in the nucleolus. This inhibits the oncogenic action of MDM2 by blocking MDM2-induced degradation of p53 and enhancing p53-dependent transactivation and apoptosis. Also induces G2 arrest and apoptosis in a p53-independent manner by preventing the activation of cyclin B1/CDC2 complexes. Binds to BCL6 and down-regulates BCL6-induced transcriptional repression. Binds to E2F1 and MYC and blocks their transcriptional activator activity but has no effect on MYC transcriptional repression. Binds to TOP1/TOPOI and stimulates its activity. This complex binds to rRNA gene promoters and may play a role in rRNA transcription and/or maturation. Interacts with NPM1/B23 and promotes its polyubiquitination and degradation, thus inhibiting rRNA processing. Plays a role in inhibiting ribosome biogenesis, perhaps by binding to the nucleolar localization sequence of transcription termination factor TTF1, and thereby preventing nucleolar localization of TTF1. Interacts with COMMD1 and promotes its 'Lys63'-linked polyubiquitination. Interacts with UBE2I/UBC9 and enhances sumoylation of a number of its binding partners including MDM2 and E2F1. Binds to HUWE1 and represses its ubiquitin ligase activity. May play a role in controlling cell proliferation and apoptosis during mammary gland development. In Rattus norvegicus (Rat), this protein is Tumor suppressor ARF.